The sequence spans 528 residues: Protein MGF 505-7R (528 aa).

ANK repeat units follow at residues 129–158 (ECDL…LLNV), 261–290 (HVNR…VPHK), and 292–322 (IERM…KVKN).

The protein belongs to the asfivirus MGF 505 family. In terms of assembly, interacts with host STING1. Interacts with host JAK1; this interaction leads to JAK1 degradation. Interacts with host JAK2; this interaction leads to JAK2 degradation. Interacts with host RELA; this interaction inhibits NF-kappa-B promoter activity.

The protein localises to the host cytoplasm. In terms of biological role, plays a role in virus cell tropism, and may be required for efficient virus replication in macrophages. Interferes with host NF-kappa-B promoter activity mediated by TLR8. Mechanistically, inhibits the phosphorylation and subsequent nuclear translocation of host NF-kappa-B RELA subunit downstream of TLR8. Promotes the expression of the autophagy-related protein host ULK1 to degrade host STING and inhibit the interferon response. Also inhibits JAK1- and JAK2-mediated signaling and thus negatively regulates the IFN-gamma signaling. The polypeptide is Protein MGF 505-7R (Ornithodoros (relapsing fever ticks)).